We begin with the raw amino-acid sequence, 362 residues long: Holliday junction branch migration complex subunit RuvB (362 aa).

The disordered stretch occupies residues M1–N20. Residues P15–Y203 are large ATPase domain (RuvB-L). ATP contacts are provided by residues L42, R43, G84, K87, T88, T89, E150 to F152, R193, Y203, and R240. T88 serves as a coordination point for Mg(2+). The small ATPAse domain (RuvB-S) stretch occupies residues P204–Q274. Positions T277–S362 are head domain (RuvB-H). Positions 332 and 337 each coordinate DNA.

Belongs to the RuvB family. In terms of assembly, homohexamer. Forms an RuvA(8)-RuvB(12)-Holliday junction (HJ) complex. HJ DNA is sandwiched between 2 RuvA tetramers; dsDNA enters through RuvA and exits via RuvB. An RuvB hexamer assembles on each DNA strand where it exits the tetramer. Each RuvB hexamer is contacted by two RuvA subunits (via domain III) on 2 adjacent RuvB subunits; this complex drives branch migration. In the full resolvosome a probable DNA-RuvA(4)-RuvB(12)-RuvC(2) complex forms which resolves the HJ.

Its subcellular location is the cytoplasm. It catalyses the reaction ATP + H2O = ADP + phosphate + H(+). The RuvA-RuvB-RuvC complex processes Holliday junction (HJ) DNA during genetic recombination and DNA repair, while the RuvA-RuvB complex plays an important role in the rescue of blocked DNA replication forks via replication fork reversal (RFR). RuvA specifically binds to HJ cruciform DNA, conferring on it an open structure. The RuvB hexamer acts as an ATP-dependent pump, pulling dsDNA into and through the RuvAB complex. RuvB forms 2 homohexamers on either side of HJ DNA bound by 1 or 2 RuvA tetramers; 4 subunits per hexamer contact DNA at a time. Coordinated motions by a converter formed by DNA-disengaged RuvB subunits stimulates ATP hydrolysis and nucleotide exchange. Immobilization of the converter enables RuvB to convert the ATP-contained energy into a lever motion, pulling 2 nucleotides of DNA out of the RuvA tetramer per ATP hydrolyzed, thus driving DNA branch migration. The RuvB motors rotate together with the DNA substrate, which together with the progressing nucleotide cycle form the mechanistic basis for DNA recombination by continuous HJ branch migration. Branch migration allows RuvC to scan DNA until it finds its consensus sequence, where it cleaves and resolves cruciform DNA. This is Holliday junction branch migration complex subunit RuvB from Bifidobacterium adolescentis (strain ATCC 15703 / DSM 20083 / NCTC 11814 / E194a).